The sequence spans 717 residues: Adhesion cell surface protein MAD1 (717 aa).

An N-terminal signal peptide occupies residues 1–19; sequence MKSALSVVVAAAGVQQASA. Composition is skewed to low complexity over residues 237-254 and 262-274; these read TPVTTLQTYTTPSQQTTT and SKETTTSAQQTTP. 2 disordered regions span residues 237–392 and 451–506; these read TPVT…ATTT and RTQS…TPPC. A run of 8 repeats spans residues 275-286, 287-298, 299-310, 311-328, 329-340, 341-352, 353-364, and 365-376. The segment covering 275–366 has biased composition (polar residues); it reads GKETTPAQQT…TPAQQTTPGK (92 aa). Composition is skewed to low complexity over residues 368-392 and 484-503; these read TTPAQQTTPGQQTTPSQPTTAATTT and QPTGEKPNPVTSQPPQSTQT. The region spanning 481-595 is the CFEM domain; it reads TPEQPTGEKP…TQIITVTGTP (115 aa). 3 disulfides stabilise this stretch: Cys-513-Cys-546, Cys-524-Cys-532, and Cys-534-Cys-568. Asp-529 serves as a coordination point for heme. A glycan (N-linked (GlcNAc...) asparagine) is linked at Asn-614. The segment at 632–690 is disordered; sequence PTPTGGVPNQPPATASVPAGQNPPPVTGQNPPPAVTDQSPPPAITTGTGGVIPPKPTGS. Positions 652–674 are enriched in pro residues; that stretch reads QNPPPVTGQNPPPAVTDQSPPPA. Ala-695 carries the GPI-anchor amidated alanine lipid modification. Positions 696–717 are cleaved as a propeptide — removed in mature form; sequence GSGRVGAGLGMVLAVAAFVAAL.

This sequence belongs to the RBT5 family. In terms of processing, the GPI-anchor is attached to the protein in the endoplasmic reticulum and serves to target the protein to the cell surface. There, the glucosamine-inositol phospholipid moiety is cleaved off and the GPI-modified mannoprotein is covalently attached via its lipidless GPI glycan remnant to the 1,6-beta-glucan of the outer cell wall layer.

The protein resides in the secreted. It is found in the cell wall. The protein localises to the cell membrane. Cell surface adhesion protein that plays a key role in virulence by allowing adherence to the insect host surface. Required to orientate the cytoskeleton and stimulate the expression of genes involved in the cell cycle. Is also involved in achieving the septin hourglass shape and subsequent separation of cells. In Metarhizium anisopliae (Entomophthora anisopliae), this protein is Adhesion cell surface protein MAD1.